A 190-amino-acid chain; its full sequence is Peptidyl-tRNA hydrolase (190 aa).

Tyr-18 provides a ligand contact to tRNA. The active-site Proton acceptor is His-23. TRNA-binding residues include Phe-67, Asn-69, and Asn-115.

It belongs to the PTH family. In terms of assembly, monomer.

It is found in the cytoplasm. It carries out the reaction an N-acyl-L-alpha-aminoacyl-tRNA + H2O = an N-acyl-L-amino acid + a tRNA + H(+). Functionally, hydrolyzes ribosome-free peptidyl-tRNAs (with 1 or more amino acids incorporated), which drop off the ribosome during protein synthesis, or as a result of ribosome stalling. In terms of biological role, catalyzes the release of premature peptidyl moieties from peptidyl-tRNA molecules trapped in stalled 50S ribosomal subunits, and thus maintains levels of free tRNAs and 50S ribosomes. The protein is Peptidyl-tRNA hydrolase of Leptospira interrogans serogroup Icterohaemorrhagiae serovar Lai (strain 56601).